Reading from the N-terminus, the 293-residue chain is Ribosomal protein L11 methyltransferase (293 aa).

4 residues coordinate S-adenosyl-L-methionine: T145, G166, D188, and N230.

The protein belongs to the methyltransferase superfamily. PrmA family.

The protein localises to the cytoplasm. The enzyme catalyses L-lysyl-[protein] + 3 S-adenosyl-L-methionine = N(6),N(6),N(6)-trimethyl-L-lysyl-[protein] + 3 S-adenosyl-L-homocysteine + 3 H(+). In terms of biological role, methylates ribosomal protein L11. The chain is Ribosomal protein L11 methyltransferase from Pasteurella multocida (strain Pm70).